The following is a 1183-amino-acid chain: DNA-directed RNA polymerase subunit beta (1183 aa).

Belongs to the RNA polymerase beta chain family. In terms of assembly, the RNAP catalytic core consists of 2 alpha, 1 beta, 1 beta' and 1 omega subunit. When a sigma factor is associated with the core the holoenzyme is formed, which can initiate transcription.

It carries out the reaction RNA(n) + a ribonucleoside 5'-triphosphate = RNA(n+1) + diphosphate. Functionally, DNA-dependent RNA polymerase catalyzes the transcription of DNA into RNA using the four ribonucleoside triphosphates as substrates. The polypeptide is DNA-directed RNA polymerase subunit beta (Staphylococcus aureus (strain MRSA252)).